The primary structure comprises 186 residues: Protein GrpE (186 aa).

Positions 1–22 are enriched in basic and acidic residues; that stretch reads MSDSNKEKKKKFADMVSKRKGD. A disordered region spans residues 1 to 35; it reads MSDSNKEKKKKFADMVSKRKGDDQEDQQTGDLSEE. Acidic residues predominate over residues 23–34; sequence DQEDQQTGDLSE.

The protein belongs to the GrpE family. Homodimer.

It is found in the cytoplasm. Its function is as follows. Participates actively in the response to hyperosmotic and heat shock by preventing the aggregation of stress-denatured proteins, in association with DnaK and GrpE. It is the nucleotide exchange factor for DnaK and may function as a thermosensor. Unfolded proteins bind initially to DnaJ; upon interaction with the DnaJ-bound protein, DnaK hydrolyzes its bound ATP, resulting in the formation of a stable complex. GrpE releases ADP from DnaK; ATP binding to DnaK triggers the release of the substrate protein, thus completing the reaction cycle. Several rounds of ATP-dependent interactions between DnaJ, DnaK and GrpE are required for fully efficient folding. In Wolbachia pipientis subsp. Culex pipiens (strain wPip), this protein is Protein GrpE.